Here is a 392-residue protein sequence, read N- to C-terminus: Lipid-A-disaccharide synthase (392 aa).

This sequence belongs to the LpxB family.

The catalysed reaction is a lipid X + a UDP-2-N,3-O-bis[(3R)-3-hydroxyacyl]-alpha-D-glucosamine = a lipid A disaccharide + UDP + H(+). Its pathway is bacterial outer membrane biogenesis; LPS lipid A biosynthesis. In terms of biological role, condensation of UDP-2,3-diacylglucosamine and 2,3-diacylglucosamine-1-phosphate to form lipid A disaccharide, a precursor of lipid A, a phosphorylated glycolipid that anchors the lipopolysaccharide to the outer membrane of the cell. This chain is Lipid-A-disaccharide synthase, found in Prochlorococcus marinus (strain MIT 9313).